The following is a 284-amino-acid chain: N-acylphosphatidylethanolamine synthase (284 aa).

The chain crosses the membrane as a helical span at residues 21-37; that stretch reads TVIMAVSAFAKAVANLC. Residues 67 to 72 carry the HXXXXD motif motif; the sequence is HMSTLD. Positions 122–163 are hydrophilic; that stretch reads GGGIYQENMNEALQRLKDGSWLHTFPEGKVFQDDVPIRRLKW.

The protein belongs to the taffazin family. In terms of tissue distribution, essentially present in young tissues. Expressed in roots, cotyledons, leaves, and shoot and root apical meristems.

It is found in the cell membrane. Acyltransferase that catalyzes the N-acylation of phosphatidylethanolamine to form N-acylphosphatidylethanolamine (N-acyl-PE) (e.g. NAPEs containing C16:0, C16:1, C18:0, and C18:1). Also mediates the formation of acylphosphatidylglycerol (acyl-PG) from lysoglycerophospholipid by O-acylation. Uses acyl-CoA as acyl donors. Acylates 1-acyllysophosphatidylethanolamine (1-acyllyso-PE) and 1-acyllysophosphatidylglycerol (1-acyllyso-PG) at the sn-2-position. The chain is N-acylphosphatidylethanolamine synthase from Arabidopsis thaliana (Mouse-ear cress).